A 517-amino-acid chain; its full sequence is Crotonobetaine/carnitine--CoA ligase (517 aa).

It belongs to the ATP-dependent AMP-binding enzyme family.

It catalyses the reaction 4-(trimethylamino)butanoate + ATP + CoA = 4-(trimethylamino)butanoyl-CoA + AMP + diphosphate. It carries out the reaction crotonobetaine + ATP + CoA = crotonobetainyl-CoA + AMP + diphosphate. The catalysed reaction is (R)-carnitine + ATP + CoA = (R)-carnitinyl-CoA + AMP + diphosphate. Its pathway is amine and polyamine metabolism; carnitine metabolism. Catalyzes the transfer of CoA to carnitine, generating the initial carnitinyl-CoA needed for the CaiB reaction cycle. Also has activity toward crotonobetaine and gamma-butyrobetaine. The protein is Crotonobetaine/carnitine--CoA ligase of Escherichia coli O6:K15:H31 (strain 536 / UPEC).